A 111-amino-acid polypeptide reads, in one-letter code: Large ribosomal subunit protein uL22 (111 aa).

This sequence belongs to the universal ribosomal protein uL22 family. Part of the 50S ribosomal subunit.

In terms of biological role, this protein binds specifically to 23S rRNA; its binding is stimulated by other ribosomal proteins, e.g. L4, L17, and L20. It is important during the early stages of 50S assembly. It makes multiple contacts with different domains of the 23S rRNA in the assembled 50S subunit and ribosome. Functionally, the globular domain of the protein is located near the polypeptide exit tunnel on the outside of the subunit, while an extended beta-hairpin is found that lines the wall of the exit tunnel in the center of the 70S ribosome. The protein is Large ribosomal subunit protein uL22 of Clostridium tetani (strain Massachusetts / E88).